Consider the following 82-residue polypeptide: Large ribosomal subunit protein bL27 (82 aa).

Residues 1–54 form a disordered region; that stretch reads MAHKKGQGASRNGRDSESKRLGMKVGAGQRVSTGSILVRQRGTKWHPSQNVGRG.

It belongs to the bacterial ribosomal protein bL27 family.

The protein is Large ribosomal subunit protein bL27 of Chlamydia caviae (strain ATCC VR-813 / DSM 19441 / 03DC25 / GPIC) (Chlamydophila caviae).